The primary structure comprises 651 residues: ATP-binding cassette sub-family G member 5 (651 aa).

A disordered region spans residues 1 to 32 (MGDLSSLTPGGSMGLQVNRGSQSSLEGAPATA). At 1 to 383 (MGDLSSLTPG…RVTRNLVRNK (383 aa)) the chain is on the cytoplasmic side. The ABC transporter domain occupies 52–293 (RPWWDITSCR…FNDCGYPCPE (242 aa)). 86-93 (GSSGSGKT) serves as a coordination point for ATP. The helical transmembrane segment at 384-404 (LAVITRLLQNLIMGLFLLFFV) threads the bilayer. Residues 388 to 645 (TRLLQNLIMG…ILGIVVFKIR (258 aa)) form the ABC transmembrane type-2 domain. The Extracellular segment spans residues 405-421 (LRVRSNVLKGAIQDRVG). The chain crosses the membrane as a helical span at residues 422–442 (LLYQFVGATPYTGMLNAVNLF). The Cytoplasmic segment spans residues 443–467 (PVLRAVSDQESQDGLYQKWQMMLAY). The helical transmembrane segment at 468–489 (ALHVLPFSVVATMIFSSVCYWT) threads the bilayer. The Extracellular portion of the chain corresponds to 490–500 (LGLHPEVARFG). A helical membrane pass occupies residues 501-521 (YFSAALLAPHLIGEFLTLVLL). Over 522–528 (GIVQNPN) the chain is Cytoplasmic. Residues 529 to 549 (IVNSVVALLSIAGVLVGSGFL) form a helical membrane-spanning segment. Over 550–623 (RNIQEMPIPF…PGATSRFTMN (74 aa)) the chain is Extracellular. Asn584 and Asn591 each carry an N-linked (GlcNAc...) asparagine glycan. The helical transmembrane segment at 624 to 644 (FLILYSFIPALVILGIVVFKI) threads the bilayer. Residues 645–651 (RDHLISR) are Cytoplasmic-facing.

Belongs to the ABC transporter superfamily. ABCG family. Eye pigment precursor importer (TC 3.A.1.204) subfamily. In terms of assembly, heterodimer with ABCG8. The cofactor is Mg(2+). In terms of processing, N-glycosylated. As to expression, strongly expressed in the liver, lower levels in the small intestine and colon.

It localises to the cell membrane. Its subcellular location is the apical cell membrane. It carries out the reaction cholesterol(in) + ATP + H2O = cholesterol(out) + ADP + phosphate + H(+). It catalyses the reaction sitosterol(in) + ATP + H2O = sitosterol(out) + ADP + phosphate + H(+). The ATPase activity of the heterodimer is stimulated by cholate. Taurocholate, glycocholate, taurochenodeoxycholate, glycochenodeoxycholate and taurodeoxycholate also stimulate ATPase activity, but to a lower degree. Glycodeoxycholate has no significant effect on ATPase activity. ATPase activity is inhibited by vanadate and by berillium fluoride. Its function is as follows. ABCG5 and ABCG8 form an obligate heterodimer that mediates Mg(2+)- and ATP-dependent sterol transport across the cell membrane. Plays an essential role in the selective transport of dietary plant sterols and cholesterol in and out of the enterocytes and in the selective sterol excretion by the liver into bile. Required for normal sterol homeostasis. The heterodimer with ABCG8 has ATPase activity. In Homo sapiens (Human), this protein is ATP-binding cassette sub-family G member 5.